The primary structure comprises 307 residues: Vesicle-trafficking protein SEC22a (307 aa).

Ser2 carries the post-translational modification N-acetylserine. Topologically, residues 2 to 187 (SMILSASVIR…ISSAHQRLEP (186 aa)) are cytoplasmic. 2 positions are modified to phosphoserine: Ser6 and Ser8. Residues 8-119 (SVIRVRDGLP…YCFIEFDNFI (112 aa)) enclose the Longin domain. Residues 188–208 (ATLSGIVGFILSLLCGALNLI) form a helical membrane-spanning segment. The Lumenal segment spans residues 209–226 (RGFHAIESLLQSDGDDFN). Residues 227-247 (YIIAFFLGTAACLYQCYLLVY) traverse the membrane as a helical segment. Over 248–253 (YTGWRN) the chain is Cytoplasmic. Residues 254 to 271 (VKSFLTFGLICLCNMYLY) form a helical membrane-spanning segment. Residues 272–274 (ELR) are Lumenal-facing. A helical membrane pass occupies residues 275 to 295 (NLWQLFFHVTVGAFVTLQIWL). Residues 296 to 307 (RQAQGKAPDYDV) lie on the Cytoplasmic side of the membrane.

Belongs to the synaptobrevin family.

The protein resides in the endoplasmic reticulum membrane. Functionally, may be involved in vesicle transport between the ER and the Golgi complex. This is Vesicle-trafficking protein SEC22a (SEC22A) from Macaca fascicularis (Crab-eating macaque).